Consider the following 576-residue polypeptide: Protein alan shepard (576 aa).

Positions 1–12 (MHPRYSPAPPPQ) are enriched in pro residues. Residues 1 to 66 (MHPRYSPAPP…GSSSSAAAAP (66 aa)) are disordered. Phosphotyrosine is present on Y5. Positions 13–24 (QQQQMGGPPHQQ) are enriched in low complexity. Over residues 25–35 (QGGGGGGGGNM) the composition is skewed to gly residues. Residues 37-54 (GPSNAQQLPPQIPRSQNY) are compositionally biased toward polar residues. Residues 55–66 (SNGSSSSAAAAP) show a composition bias toward low complexity. Phosphotyrosine occurs at positions 125 and 142. The interval 164–225 (PATTTYGQRV…TVQNQNQQGG (62 aa)) is disordered. Residues 178-225 (SPSNTNSSSSSNTGSQSGTLSTSLSNTTNTNTNMGPNGTVQNQNQQGG) show a composition bias toward low complexity. 2 RRM domains span residues 231-302 (TNLY…MAKQ) and 308-387 (TNLY…FADG). The interval 538–576 (YAPPPTIIPTMPMTDSEQASTAASPDEAYTQYPHQAAPK) is disordered.

Its function is as follows. Has a role in the perception of gravity. The polypeptide is Protein alan shepard (Drosophila simulans (Fruit fly)).